Reading from the N-terminus, the 26-residue chain is Dermaseptin-J2 (26 aa).

Val-26 carries the valine amide modification.

Expressed by the skin glands.

The protein localises to the secreted. Has antimicrobial activity. This is Dermaseptin-J2 from Phasmahyla jandaia (Jandaia leaf frog).